Reading from the N-terminus, the 714-residue chain is Structure-specific endonuclease subunit SLX4 2 (714 aa).

Composition is skewed to basic and acidic residues over residues 1-14 and 24-34; these read MSPE…EDNL and IHEETLAEESH. 2 disordered regions span residues 1–114 and 338–369; these read MSPE…EQQG and SSGP…KTPQ. The segment covering 36–46 has biased composition (polar residues); the sequence is QAIQRSISRLS. Over residues 79-92 the composition is skewed to basic residues; that stretch reads KTKKRKLKVSKPRK.

It belongs to the SLX4 family. In terms of assembly, forms a heterodimer with SLX1. In terms of processing, phosphorylated in response to DNA damage.

The protein resides in the nucleus. Its function is as follows. Regulatory subunit of the SLX1-SLX4 structure-specific endonuclease that resolves DNA secondary structures generated during DNA repair and recombination. Has endonuclease activity towards branched DNA substrates, introducing single-strand cuts in duplex DNA close to junctions with ss-DNA. The sequence is that of Structure-specific endonuclease subunit SLX4 2 from Candida tropicalis (strain ATCC MYA-3404 / T1) (Yeast).